A 254-amino-acid polypeptide reads, in one-letter code: MGAGLVASLLAGTATGLGALPVLVTSELSRKAQGPDVGLQRGRDAGGQSFSLVIPAMELVRGQGHDGPSAALRVAAGVLLGGLFLRVWHDLMPHEHALKGHEGHGGTKWNSALLFVLAMTLHNFPEGLAVGVSFAAPQPELGLSVALGIGAQNIPEGLVVALALRASGASASRAAFLALLTGMVEPVGALFGVLALSLSSALLPWGLAFAGGAMLYVISHEMIPESHRGGFEREATTGLMWGFVLALVLDMSLG.

7 helical membrane-spanning segments follow: residues 4-24 (GLVA…PVLV), 74-94 (VAAG…LMPH), 112-132 (ALLF…AVGV), 143-163 (LSVA…VALA), 176-196 (FLAL…VLAL), 198-218 (LSSA…LYVI), and 234-254 (EATT…MSLG). Residues Asn123, Glu126, Gln152, Asn153, Glu156, and Glu185 each contribute to the Zn(2+) site.

Belongs to the ZIP transporter (TC 2.A.5) family. As to quaternary structure, homodimer.

The protein localises to the cell inner membrane. In terms of biological role, mediates the uptake of Zn(2+). In Myxococcus xanthus, this protein is Zinc transporter GufA (gufA).